We begin with the raw amino-acid sequence, 56 residues long: Large ribosomal subunit protein bL32 (56 aa).

Residues 1–21 form a disordered region; sequence MGVPQRRQSHARKNKRRSEWR. The span at 7–19 shows a compositional bias: basic residues; that stretch reads RQSHARKNKRRSE.

It belongs to the bacterial ribosomal protein bL32 family.

In Syntrophomonas wolfei subsp. wolfei (strain DSM 2245B / Goettingen), this protein is Large ribosomal subunit protein bL32.